The primary structure comprises 1280 residues: Papilin (1280 aa).

Positions 1–20 are cleaved as a signal peptide; that stretch reads MQLFPLLFSLLLTSTPGSWA. TSP type-1 domains lie at 27–81, 305–362, 363–422, 424–482, and 485–540; these read SDTW…ESCP, RGFS…QPCP, KTKR…ACNL, HCAV…EACP, and RGQA…QPCH. Disulfide bonds link Cys-39–Cys-75, Cys-43–Cys-80, and Cys-54–Cys-65. Disulfide bonds link Cys-425–Cys-464, Cys-436–Cys-476, and Cys-440–Cys-481. Disordered stretches follow at residues 541–626 and 672–715; these read LPQE…DCRH and PQQA…PSEC. Over residues 585–599 the composition is skewed to polar residues; that stretch reads AQSNPREGQDPNLSS. The span at 706–715 shows a compositional bias: basic and acidic residues; sequence QAHEGEPSEC. Cystine bridges form between Cys-750–Cys-800, Cys-759–Cys-783, and Cys-775–Cys-796. A BPTI/Kunitz inhibitor domain is found at 750–800; that stretch reads CLLPSAQGSCGDWAARWYFVASVGRCNRFWYGGCHGNANNFASEQECMNTC. Positions 800–902 are disordered; that stretch reads CRGQHGPRRP…AVPPTHSPSY (103 aa). Positions 879-891 are enriched in basic and acidic residues; that stretch reads IRPRVPGLDREAR. Residues 900-990 form the Ig-like C2-type 1 domain; sequence PSYRIRLAGS…EPQEIQLRVT (91 aa). A disulfide bridge links Cys-926 with Cys-973. A compositionally biased stretch (basic and acidic residues) spans 1002–1012; sequence PRHFPEPRNPD. The interval 1002 to 1042 is disordered; sequence PRHFPEPRNPDLGHGPPHRGTGAEAGGHRVLSPSHPRPATR. 2 Ig-like C2-type domains span residues 1039–1128 and 1133–1218; these read PATR…VQLR and LTIT…TEVK. 2 disulfides stabilise this stretch: Cys-1065-Cys-1112 and Cys-1154-Cys-1202. The 40-residue stretch at 1231–1270 folds into the PLAC domain; that stretch reads LGKDCIDQPELANCALILQAQLCGNEYYSSFCCASCSRFQ.

The protein belongs to the papilin family.

The protein resides in the secreted. The chain is Papilin (Papln) from Mus musculus (Mouse).